A 432-amino-acid chain; its full sequence is MVNEQIIDISGPLKGEIEVPGDKSMTHRAIMLASLAEGVSTIYKPLLGEDCRRTMDIFRLLGVDIKEDEDKLVVNSPGYKAFKTPHQVLYTGNSGTTTRLLAGLLSGLGIESVLSGDVSIGKRPMDRVLRPLKSMNANIEGIEDNYTPLIIKPSVIKGINYKMEVASAQVKSAILFASLFSKEATIIKELDVSRNHTETMFRHFNIPIEAEGLSITTIPEAIRYIKPADFHVPGDISSAAFFIVAALITPGSDVTIHNVGINPTRSGIIDIVEKMGGNIQLFNQTTGAEPTASIRIQYTPMLQPIKIEGELVPKAIDELPVIALLCTQAVGTSTIKDAEELKVKETNRIDTTADMLNLLGFELQPTNDGLIIHPSEFKTNATVDSLTDHRIGMMLAVASLLSSEPVKIKQFDAVNVSFPGFLPKLKLLENEG.

3-phosphoshikimate contacts are provided by K23, S24, and R28. Residue K23 coordinates phosphoenolpyruvate. Residues G95 and R123 each contribute to the phosphoenolpyruvate site. 3-phosphoshikimate contacts are provided by S167, Q169, D317, and K344. Q169 is a phosphoenolpyruvate binding site. The active-site Proton acceptor is D317. Phosphoenolpyruvate is bound by residues R348 and R390.

The protein belongs to the EPSP synthase family. Monomer.

The protein resides in the cytoplasm. It catalyses the reaction 3-phosphoshikimate + phosphoenolpyruvate = 5-O-(1-carboxyvinyl)-3-phosphoshikimate + phosphate. Its pathway is metabolic intermediate biosynthesis; chorismate biosynthesis; chorismate from D-erythrose 4-phosphate and phosphoenolpyruvate: step 6/7. Catalyzes the transfer of the enolpyruvyl moiety of phosphoenolpyruvate (PEP) to the 5-hydroxyl of shikimate-3-phosphate (S3P) to produce enolpyruvyl shikimate-3-phosphate and inorganic phosphate. This chain is 3-phosphoshikimate 1-carboxyvinyltransferase, found in Staphylococcus aureus (strain MRSA252).